The following is an 860-amino-acid chain: Alanine--tRNA ligase (860 aa).

Zn(2+)-binding residues include histidine 553, histidine 557, cysteine 655, and histidine 659.

It belongs to the class-II aminoacyl-tRNA synthetase family. It depends on Zn(2+) as a cofactor.

The protein resides in the cytoplasm. It carries out the reaction tRNA(Ala) + L-alanine + ATP = L-alanyl-tRNA(Ala) + AMP + diphosphate. Functionally, catalyzes the attachment of alanine to tRNA(Ala) in a two-step reaction: alanine is first activated by ATP to form Ala-AMP and then transferred to the acceptor end of tRNA(Ala). Also edits incorrectly charged Ser-tRNA(Ala) and Gly-tRNA(Ala) via its editing domain. This Legionella pneumophila (strain Lens) protein is Alanine--tRNA ligase.